A 614-amino-acid chain; its full sequence is Translation initiation factor IF-2 (614 aa).

One can recognise a tr-type G domain in the interval 115–283; it reads ARAPIVTIMG…ILLIAELNDY (169 aa). The segment at 124–131 is G1; that stretch reads GHVDHGKT. GTP is bound at residue 124-131; the sequence is GHVDHGKT. The tract at residues 149–153 is G2; it reads GITQH. The segment at 170–173 is G3; sequence DTPG. Residues 170–174 and 224–227 contribute to the GTP site; these read DTPGH and NKMD. The segment at 224–227 is G4; that stretch reads NKMD. The tract at residues 260-262 is G5; it reads SAL.

This sequence belongs to the TRAFAC class translation factor GTPase superfamily. Classic translation factor GTPase family. IF-2 subfamily.

It is found in the cytoplasm. One of the essential components for the initiation of protein synthesis. Protects formylmethionyl-tRNA from spontaneous hydrolysis and promotes its binding to the 30S ribosomal subunits. Also involved in the hydrolysis of GTP during the formation of the 70S ribosomal complex. The sequence is that of Translation initiation factor IF-2 from Ureaplasma urealyticum serovar 10 (strain ATCC 33699 / Western).